Consider the following 343-residue polypeptide: Cytoplasmic tRNA 2-thiolation protein 1 (343 aa).

Belongs to the TtcA family. CTU1/NCS6/ATPBD3 subfamily.

The protein localises to the cytoplasm. It participates in tRNA modification; 5-methoxycarbonylmethyl-2-thiouridine-tRNA biosynthesis. Its function is as follows. Plays a central role in 2-thiolation of mcm(5)S(2)U at tRNA wobble positions of tRNA(Lys), tRNA(Glu) and tRNA(Gln). Directly binds tRNAs and probably acts by catalyzing adenylation of tRNAs, an intermediate required for 2-thiolation. It is unclear whether it acts as a sulfurtransferase that transfers sulfur from thiocarboxylated URM1 onto the uridine of tRNAs at wobble position. This is Cytoplasmic tRNA 2-thiolation protein 1 from Drosophila sechellia (Fruit fly).